The primary structure comprises 990 residues: A-type ATP synthase subunit B (990 aa).

The region spanning 491–614 (VAGLIASDGS…LQLLLKRLGV (124 aa)) is the DOD-type homing endonuclease domain.

Belongs to the ATPase alpha/beta chains family. In terms of assembly, has multiple subunits with at least A(3), B(3), C, D, E, F, H, I and proteolipid K(x). In terms of processing, this protein undergoes a protein self splicing that involves a post-translational excision of the VDE intervening region (intein) followed by peptide ligation.

The protein resides in the cell membrane. Functionally, component of the A-type ATP synthase that produces ATP from ADP in the presence of a proton gradient across the membrane. The B chain is a regulatory subunit. This is A-type ATP synthase subunit B from Methanopyrus kandleri (strain AV19 / DSM 6324 / JCM 9639 / NBRC 100938).